The following is a 739-amino-acid chain: Catalase-peroxidase (739 aa).

A signal peptide spans methionine 1–alanine 23. Residues tryptophan 100–tyrosine 221 constitute a cross-link (tryptophyl-tyrosyl-methioninium (Trp-Tyr) (with M-247)). Catalysis depends on histidine 101, which acts as the Proton acceptor. Positions tyrosine 221–methionine 247 form a cross-link, tryptophyl-tyrosyl-methioninium (Tyr-Met) (with W-100). Histidine 262 is a binding site for heme b.

This sequence belongs to the peroxidase family. Peroxidase/catalase subfamily. In terms of assembly, homodimer or homotetramer. Heme b serves as cofactor. Post-translationally, formation of the three residue Trp-Tyr-Met cross-link is important for the catalase, but not the peroxidase activity of the enzyme.

It carries out the reaction H2O2 + AH2 = A + 2 H2O. The catalysed reaction is 2 H2O2 = O2 + 2 H2O. In terms of biological role, bifunctional enzyme with both catalase and broad-spectrum peroxidase activity. In Francisella philomiragia subsp. philomiragia (strain ATCC 25017 / CCUG 19701 / FSC 153 / O#319-036), this protein is Catalase-peroxidase.